The chain runs to 123 residues: MYRKGAQAERELIKLLEKHGFAVVRSAGSKKVDLVAGNGKKYLCIEVKVTKKDHLYVGKRDMGRLIEFSRRFGGIPVLAVKFLNVGWRFIEVSPKIEKFVFTPSSGVSLEVLLGIQKTLEGKS.

Glu9 lines the Mg(2+) pocket. The active site involves Ser29. The Mg(2+) site is built by Asp33 and Glu46.

This sequence belongs to the Holliday junction resolvase Hjc family. As to quaternary structure, homodimer. Probably interacts with PCNA and RadB. Mg(2+) serves as cofactor. Mn(2+) is required as a cofactor.

The enzyme catalyses Endonucleolytic cleavage at a junction such as a reciprocal single-stranded crossover between two homologous DNA duplexes (Holliday junction).. Cleavage inhibited by RadB in the absence (but not presence) of ATP. In terms of biological role, a structure-specific endonuclease that resolves Holliday junction (HJ) intermediates during genetic recombination. Cleaves 4-way DNA junctions introducing paired nicks in opposing strands, leaving a 5'-terminal phosphate and a 3'-terminal hydroxyl group that are subsequently ligated to produce recombinant products. Cleaves both mobile and immobile junctions. Binds 4-way junction DNA, a synthetic Hj, binding is not competed by dsDNA. This chain is Crossover junction endodeoxyribonuclease Hjc, found in Pyrococcus furiosus (strain ATCC 43587 / DSM 3638 / JCM 8422 / Vc1).